A 448-amino-acid polypeptide reads, in one-letter code: Glucose-6-phosphate isomerase (448 aa).

Glu-290 (proton donor) is an active-site residue. Residues His-311 and Lys-425 contribute to the active site.

This sequence belongs to the GPI family.

The protein resides in the cytoplasm. It catalyses the reaction alpha-D-glucose 6-phosphate = beta-D-fructose 6-phosphate. Its pathway is carbohydrate biosynthesis; gluconeogenesis. It functions in the pathway carbohydrate degradation; glycolysis; D-glyceraldehyde 3-phosphate and glycerone phosphate from D-glucose: step 2/4. In terms of biological role, catalyzes the reversible isomerization of glucose-6-phosphate to fructose-6-phosphate. This is Glucose-6-phosphate isomerase from Acetivibrio thermocellus (strain ATCC 27405 / DSM 1237 / JCM 9322 / NBRC 103400 / NCIMB 10682 / NRRL B-4536 / VPI 7372) (Clostridium thermocellum).